Consider the following 233-residue polypeptide: Large ribosomal subunit protein uL1 (233 aa).

This sequence belongs to the universal ribosomal protein uL1 family. As to quaternary structure, part of the 50S ribosomal subunit.

Binds directly to 23S rRNA. The L1 stalk is quite mobile in the ribosome, and is involved in E site tRNA release. Functionally, protein L1 is also a translational repressor protein, it controls the translation of the L11 operon by binding to its mRNA. This chain is Large ribosomal subunit protein uL1, found in Geobacillus stearothermophilus (Bacillus stearothermophilus).